The chain runs to 133 residues: Histone H2A.1 (133 aa).

The segment at 1–23 (MSTTGKGGKAKGKTASSKQVSRS) is disordered. At S2 the chain carries N-acetylserine. K6, K9, K11, K13, and K18 each carry N6-acetyllysine. S123 is subject to Phosphoserine. K124 is covalently cross-linked (Glycyl lysine isopeptide (Lys-Gly) (interchain with G-Cter in ubiquitin)).

Belongs to the histone H2A family. In terms of assembly, the nucleosome is a histone octamer containing two molecules each of H2A, H2B, H3 and H4 assembled in one H3-H4 heterotetramer and two H2A-H2B heterodimers. The octamer wraps approximately 147 bp of DNA. In terms of processing, monoubiquitination of Lys-124 gives a specific tag for epigenetic transcriptional repression. Acetylation occurs almost exclusively in the MAC.

It is found in the nucleus. It localises to the chromosome. Its function is as follows. Core component of nucleosome. Nucleosomes wrap and compact DNA into chromatin, limiting DNA accessibility to the cellular machineries which require DNA as a template. Histones thereby play a central role in transcription regulation, DNA repair, DNA replication and chromosomal stability. DNA accessibility is regulated via a complex set of post-translational modifications of histones, also called histone code, and nucleosome remodeling. The sequence is that of Histone H2A.1 (HTA2) from Tetrahymena thermophila (strain SB210).